A 499-amino-acid chain; its full sequence is Endoglucanase (499 aa).

The N-terminal stretch at 1–29 (MKRSISIFITCLLITLLTMGGMLASPASA) is a signal peptide. Residues histidine 65, 69–70 (WY), tyrosine 96, and histidine 131 contribute to the substrate site. Glutamate 169 acts as the Proton donor in catalysis. Tyrosine 231 provides a ligand contact to substrate. Glutamate 257 acts as the Nucleophile in catalysis. Substrate-binding positions include 263-264 (AS), tryptophan 291, and 296-298 (KQE). Residues 350–499 (QENGISVQYR…GKLIWGTEPN (150 aa)) enclose the CBM3 domain.

This sequence belongs to the glycosyl hydrolase 5 (cellulase A) family.

It catalyses the reaction Endohydrolysis of (1-&gt;4)-beta-D-glucosidic linkages in cellulose, lichenin and cereal beta-D-glucans.. In Bacillus subtilis, this protein is Endoglucanase (bglC).